The following is an 898-amino-acid chain: Serine/threonine-protein kinase TAO3 (898 aa).

Residues 24-277 (FIDLHEIGHG…AVELLRHDFI (254 aa)) form the Protein kinase domain. ATP contacts are provided by residues 30 to 38 (IGHGSFGAV) and Lys-53. The active-site Proton acceptor is Asp-147. Disordered stretches follow at residues 316–375 (TRNG…DESS) and 405–424 (DEAG…SVQS). At Ser-324 the chain carries Phosphoserine; by ATM. Phosphoserine occurs at positions 343, 346, and 349. Positions 349 to 366 (SIPSTSVSTGSRSSSVNS) are enriched in low complexity. A Phosphothreonine modification is found at Thr-357. Ser-359 bears the Phosphoserine mark. Basic and acidic residues predominate over residues 405–416 (DEAGHGDPRPEP). The residue at position 442 (Ser-442) is a Phosphoserine. Coiled-coil stretches lie at residues 452–502 (EQEN…THAN), 548–649 (FLES…HAML), and 754–871 (LKTL…QERE). The disordered stretch occupies residues 565–596 (EEMNEDHSTPKKEKQERISKHKENLQHTQAEE). N6-acetyllysine is present on Lys-830.

Belongs to the protein kinase superfamily. STE Ser/Thr protein kinase family. STE20 subfamily. Self-associates. Interacts with ERN1 and TRAF2. Interaction with TRAF2 is facilitated under ER stress conditions, such as treatment with tunicamycin, and may promote TRAF2 phosphorylation. Interacts (via N-terminus) with STK25; the interaction promotes STK25 abundance at the level of protein expression and/or stability. In terms of processing, autophosphorylated. Phosphorylation at Ser-324 by ATM following DNA damage is required for activation of the p38/MAPK14 stress-activated MAPK cascade. Phosphorylated at Ser-324 and on Tyr residues during T cell activation. Phosphorylated by LRRK2.

It is found in the cytoplasm. The protein localises to the cell membrane. The protein resides in the membrane raft. It localises to the lipid droplet. The enzyme catalyses L-seryl-[protein] + ATP = O-phospho-L-seryl-[protein] + ADP + H(+). It catalyses the reaction L-threonyl-[protein] + ATP = O-phospho-L-threonyl-[protein] + ADP + H(+). In terms of biological role, serine/threonine-protein kinase that acts as a regulator of the p38/MAPK14 stress-activated MAPK cascade and of the MAPK8/JNK cascade. In response to DNA damage, involved in the G2/M transition DNA damage checkpoint by activating the p38/MAPK14 stress-activated MAPK cascade, probably by mediating phosphorylation of upstream MAP2K3 and MAP2K6 kinases. Inhibits basal activity of the MAPK8/JNK cascade and diminishes its activation in response to epidermal growth factor (EGF). Positively regulates canonical T cell receptor (TCR) signaling by preventing early PTPN6/SHP1-mediated inactivation of LCK, ensuring sustained TCR signaling that is required for optimal activation and differentiation of T cells. Phosphorylates PTPN6/SHP1 on 'Thr-394', leading to its polyubiquitination and subsequent proteasomal degradation. Required for cell surface expression of metalloprotease ADAM10 on type 1 transitional B cells which is necessary for their NOTCH-mediated development into marginal zone B cells. Also required for the NOTCH-mediated terminal differentiation of splenic conventional type 2 dendritic cells. Positively regulates osteoblast differentiation by acting as an upstream activator of the JNK pathway. Promotes JNK signaling in hepatocytes and positively regulates hepatocyte lipid storage by inhibiting beta-oxidation and triacylglycerol secretion while enhancing lipid synthesis. Restricts age-associated inflammation by negatively regulating differentiation of macrophages and their production of pro-inflammatory cytokines. Plays a role in negatively regulating the abundance of regulatory T cells in white adipose tissue. The chain is Serine/threonine-protein kinase TAO3 (Taok3) from Mus musculus (Mouse).